We begin with the raw amino-acid sequence, 869 residues long: MEAVAELSAPSLAGAPGEYTWIVAVAGVTCFLTAFAIGANDVANTFSSSVGSRAIPLWAAIGMSAVLETVGATLLGGAVTDSIRSKIIDFEVFRETPSILMTGMLCALVGAGLWLFLANHLGLPVSTTHSIIGALLGFGLASGNVRAVKWTQVAFIVGSWVAAPLAASAAGATIFVCMRRLILRSRQPLRRAKRFLWIFIYLITLTFSVFLVFKNFFELNVSCDQMVAGGRVEHFEPCRISRWADAHSGTALGIAVALSVALTFVISCLVYRFAFYRVESYRRRQKRSSRTEPRDASEEGTGPSHARPGGLLLTPRSCVAKEGERRPGALEDALRLAGEENARIASAESRLQKPPPLECMDTCADSLQINDGRAAAAKPDVGTAAQSPESRFAADPVGSSVPDRSVLAFSRSLAEDAQAAFHASVQHCASPRCSAASRGDSRYPLQRSTSDFSAFLSSPSSSVPPSSPSPSSTPSSPSASPRRPPSRPPVPRTCSPAPVSPSVPRAFASTATHGHPPALSDTDADTPEGPDRRRQSAALAGAKDAEASPLFADLAPHPERRDEVPAAKRERDARRTLLLPPRVTGEAPEGFFAPTVSHDDNGLVFVSQADLADSLGSGVDEEEDAPRSWRGKLKAAWRSMPWFKDIHAEGSTEDDLVARLQTGAEVFDTETELFFSACQVVSACMGCIAHSANDTANAIGPFAAILTVYQSGSADSEIGSPWYILLFGGLSMSLGLALLGYRVIKTVGVKLVKITPARGFSMELGAAWTVLIFSAIGIPLSTTHCAVGSTVGVGLMEPKHPRRETGDGPVAEGEEPKKRAVQCPVINTASVNWKLFGGVFVSWIITIAFSALVTAALFSFAAYSPRMVS.

The Extracellular portion of the chain corresponds to 1-18 (MEAVAELSAPSLAGAPGE). A helical membrane pass occupies residues 19–39 (YTWIVAVAGVTCFLTAFAIGA). The Cytoplasmic portion of the chain corresponds to 40-54 (NDVANTFSSSVGSRA). A helical transmembrane segment spans residues 55 to 75 (IPLWAAIGMSAVLETVGATLL). Topologically, residues 76–97 (GGAVTDSIRSKIIDFEVFRETP) are extracellular. Residues 98–118 (SILMTGMLCALVGAGLWLFLA) traverse the membrane as a helical segment. Over 119–120 (NH) the chain is Cytoplasmic. The helical transmembrane segment at 121-141 (LGLPVSTTHSIIGALLGFGLA) threads the bilayer. The Extracellular segment spans residues 142–154 (SGNVRAVKWTQVA). Residues 155–175 (FIVGSWVAAPLAASAAGATIF) form a helical membrane-spanning segment. The Cytoplasmic segment spans residues 176 to 196 (VCMRRLILRSRQPLRRAKRFL). A helical membrane pass occupies residues 197 to 217 (WIFIYLITLTFSVFLVFKNFF). The Extracellular segment spans residues 218-250 (ELNVSCDQMVAGGRVEHFEPCRISRWADAHSGT). A helical membrane pass occupies residues 251-271 (ALGIAVALSVALTFVISCLVY). The Cytoplasmic portion of the chain corresponds to 272–720 (RFAFYRVESY…SGSADSEIGS (449 aa)). 3 disordered regions span residues 286–312 (KRSS…GGLL), 374–401 (AAAA…GSSV), and 453–571 (SAFL…KRER). Over residues 457–481 (SSPSSSVPPSSPSPSSTPSSPSASP) the composition is skewed to low complexity. The span at 482–491 (RRPPSRPPVP) shows a compositional bias: pro residues. Low complexity predominate over residues 492-509 (RTCSPAPVSPSVPRAFAS). Over residues 556 to 571 (PHPERRDEVPAAKRER) the composition is skewed to basic and acidic residues. The chain crosses the membrane as a helical span at residues 721 to 741 (PWYILLFGGLSMSLGLALLGY). Topologically, residues 742 to 759 (RVIKTVGVKLVKITPARG) are extracellular. Residues 760 to 780 (FSMELGAAWTVLIFSAIGIPL) form a helical membrane-spanning segment. Over 781-837 (STTHCAVGSTVGVGLMEPKHPRRETGDGPVAEGEEPKKRAVQCPVINTASVNWKLFG) the chain is Cytoplasmic. Residues 838–858 (GVFVSWIITIAFSALVTAALF) form a helical membrane-spanning segment. Over 859 to 869 (SFAAYSPRMVS) the chain is Extracellular.

The protein belongs to the inorganic phosphate transporter (PiT) (TC 2.A.20) family.

It is found in the cell membrane. Its subcellular location is the vacuole membrane. The protein localises to the cytoplasmic vesicle membrane. The catalysed reaction is 2 Na(+)(out) + phosphate(out) = 2 Na(+)(in) + phosphate(in). Functionally, sodium-phosphate symporter which preferentially transports the monovalent form of phosphate with a stoichiometry of two sodium ions per phosphate ion. Plays a role in stabilizing the cytosolic pH and osmoregulation. May be required for optimal virulence of parasites in vivo. This is Sodium-dependent phosphate transporter from Toxoplasma gondii (strain ATCC 50861 / VEG).